A 332-amino-acid polypeptide reads, in one-letter code: Ferredoxin--NADP reductase (332 aa).

8 residues coordinate FAD: Thr20, Glu39, Gln47, Tyr52, Val92, Phe126, Asp288, and Thr329.

The protein belongs to the ferredoxin--NADP reductase type 2 family. As to quaternary structure, homodimer. The cofactor is FAD.

The catalysed reaction is 2 reduced [2Fe-2S]-[ferredoxin] + NADP(+) + H(+) = 2 oxidized [2Fe-2S]-[ferredoxin] + NADPH. This Geobacillus kaustophilus (strain HTA426) protein is Ferredoxin--NADP reductase.